The sequence spans 85 residues: Putative membrane protein insertion efficiency factor (85 aa).

The tract at residues 66–85 (PLNSGGDDPVPPKLDDNREH) is disordered.

Belongs to the UPF0161 family.

Its subcellular location is the cell inner membrane. Functionally, could be involved in insertion of integral membrane proteins into the membrane. This chain is Putative membrane protein insertion efficiency factor, found in Yersinia pestis bv. Antiqua (strain Antiqua).